The chain runs to 266 residues: MPKGKKAKGKKVAPAPAVVKKQEAKKVVNPLFEKRPKNFGIGQDIQPKRDLTRFVKWPRYIRLQRQRAILYKRLKVPPAINQFTQALDRQTATQLLKLAHKYRPETKQEKKQRLLARAEKKAAGKGDVPTKRPPVLRAGVNTVTTLVENKKAQLVVIAHDVDPIELVVFLPALCRKMGVPYCIIKGKARLGHLVHRKTCTTVAFTQVNSEDKGALAKLVEAIRTNYNDRYDEIRRHWGGNVLGPKSVARIAKLEKAKAKELATKLG.

Residues K11, K20, and K21 each participate in a glycyl lysine isopeptide (Lys-Gly) (interchain with G-Cter in SUMO2) cross-link. An N6-acetyllysine modification is found at K34. Residue K48 forms a Glycyl lysine isopeptide (Lys-Gly) (interchain with G-Cter in SUMO2) linkage. Position 97 is an N6-acetyllysine; alternate (K97). K97 is covalently cross-linked (Glycyl lysine isopeptide (Lys-Gly) (interchain with G-Cter in SUMO2); alternate). K125 is covalently cross-linked (Glycyl lysine isopeptide (Lys-Gly) (interchain with G-Cter in SUMO2)). Residue K217 is modified to N6-acetyllysine. Residue K245 forms a Glycyl lysine isopeptide (Lys-Gly) (interchain with G-Cter in SUMO2) linkage.

Belongs to the eukaryotic ribosomal protein eL8 family. As to quaternary structure, component of the large ribosomal subunit. Interacts with CRY1. Interacts with DICER1, AGO2, TARBP2, MOV10 and EIF6; they form a large RNA-induced silencing complex (RISC).

It is found in the cytoplasm. In terms of biological role, component of the large ribosomal subunit. The ribosome is a large ribonucleoprotein complex responsible for the synthesis of proteins in the cell. In Mus musculus (Mouse), this protein is Large ribosomal subunit protein eL8 (Rpl7a).